A 417-amino-acid polypeptide reads, in one-letter code: Tumor necrosis factor receptor superfamily member 25 (417 aa).

The N-terminal stretch at 1–24 (MEQRPRGCAAVAAALLLVLLGARA) is a signal peptide. Topologically, residues 25–199 (QGGTRSPRCD…RCAAVCGWRQ (175 aa)) are extracellular. TNFR-Cys repeat units follow at residues 34–71 (DCAG…STCL), 72–115 (VCPQ…DTRC), 116–163 (GCKP…TDCG), and 164–192 (TCLP…ERCA). 12 disulfides stabilise this stretch: Cys-35/Cys-47, Cys-48/Cys-61, Cys-51/Cys-70, Cys-73/Cys-89, Cys-92/Cys-107, Cys-95/Cys-115, Cys-117/Cys-130, Cys-138/Cys-155, Cys-141/Cys-162, Cys-165/Cys-176, Cys-179/Cys-191, and Cys-187/Cys-195. A glycan (N-linked (GlcNAc...) asparagine) is linked at Asn-67. A glycan (N-linked (GlcNAc...) asparagine) is linked at Asn-106. A helical transmembrane segment spans residues 200–220 (MFWVQVLLAGLVVPLLLGATL). Over 221 to 417 (TYTYRHCWPH…DLRSRLQRGP (197 aa)) the chain is Cytoplasmic. The Death domain occupies 332 to 413 (GPQLYDVMDA…GCVEDLRSRL (82 aa)). The (Microbial infection) N-beta-linked (GlcNAc) arginine glycan is linked to Arg-352.

In terms of assembly, homodimer. Interacts strongly via the death domains with TNFRSF1 and TRADD to activate at least two distinct signaling cascades, apoptosis and NF-kappa-B signaling. Interacts with BAG4. Post-translationally, (Microbial infection) Glycosylated at Arg-352 by enteropathogenic E.coli protein NleB1. Glycosylated. In terms of tissue distribution, abundantly expressed in thymocytes and lymphocytes. Detected in lymphocyte-rich tissues such as thymus, colon, intestine, and spleen. Also found in the prostate.

It localises to the cell membrane. The protein resides in the secreted. In terms of biological role, receptor for TNFSF12/APO3L/TWEAK. Interacts directly with the adapter TRADD. Mediates activation of NF-kappa-B and induces apoptosis. May play a role in regulating lymphocyte homeostasis. The polypeptide is Tumor necrosis factor receptor superfamily member 25 (TNFRSF25) (Homo sapiens (Human)).